We begin with the raw amino-acid sequence, 332 residues long: Nucleoid-associated protein VP2128 (332 aa).

The protein belongs to the YejK family.

The protein resides in the cytoplasm. It localises to the nucleoid. This Vibrio parahaemolyticus serotype O3:K6 (strain RIMD 2210633) protein is Nucleoid-associated protein VP2128.